We begin with the raw amino-acid sequence, 926 residues long: DNA topoisomerase 3-alpha (926 aa).

The 145-residue stretch at 10-154 (TVLNVAEKPS…NLFIRRAHFS (145 aa)) folds into the Toprim domain. Glu16, Asp123, and Asp125 together coordinate Mg(2+). The Topo IA-type catalytic domain maps to 172 to 604 (NQLFAEAVDA…CLQQMKACFL (433 aa)). Positions 219-224 (SYGPCQ) are interaction with DNA. Catalysis depends on Tyr342, which acts as the O-(5'-phospho-DNA)-tyrosine intermediate. A C4-type zinc finger spans residues 642-670 (CNLCNESDMALRKNRDGNFMVGCMNYPQC). Disordered stretches follow at residues 740–760 (SRSQ…QGSN) and 775–806 (HAST…TVSC). Residues 750–760 (TAPSNNIQGSN) show a composition bias toward polar residues. The CCHC-type 1 zinc finger occupies 767–782 (CIHCQQRGHASTNCPS). Zn(2+) is bound by residues Cys806, Cys809, Cys831, and Cys836. A GRF-type zinc finger spans residues 806–845 (CNTCGSQCVLRTANTEANRGRQFFSCPTQGCSFFAWEDSI). The disordered stretch occupies residues 849-890 (SGNATTGSNSGGSGRRGSRGRGRGGRGGQSSGGRRGSGTSFV). Positions 873–884 (GRGGQSSGGRRG) are enriched in gly residues. The CCHC-type 2 zinc-finger motif lies at 901-917 (RCFSCGDPSHFANACPN).

It belongs to the type IA topoisomerase family. As to quaternary structure, component of the RMI complex, containing at least TOP3A and RMI1. The RMI complex interacts with RECQL4A. It depends on Mg(2+) as a cofactor.

It carries out the reaction ATP-independent breakage of single-stranded DNA, followed by passage and rejoining.. In terms of biological role, releases the supercoiling and torsional tension of DNA introduced during the DNA replication and transcription by transiently cleaving and rejoining one strand of the DNA duplex. Introduces a single-strand break via transesterification at a target site in duplex DNA. The scissile phosphodiester is attacked by the catalytic tyrosine of the enzyme, resulting in the formation of a DNA-(5'-phosphotyrosyl)-enzyme intermediate and the expulsion of a 3'-OH DNA strand. The free DNA strand then undergoes passage around the unbroken strand thus removing DNA supercoils. Finally, in the religation step, the DNA 3'-OH attacks the covalent intermediate to expel the active-site tyrosine and restore the DNA phosphodiester backbone. Essential component of the RMI complex, a complex that plays an important role in the resolution step of homologous recombination, in a process called Holliday Junction dissolution, to limit DNA crossover formation in cells. Together with RMI1, is essential for the resolution of meiotic recombination intermediates, a step that prevents entanglement of the parental chromosomes. May have DNA decatenation activity. The sequence is that of DNA topoisomerase 3-alpha (TOP3A) from Arabidopsis thaliana (Mouse-ear cress).